Reading from the N-terminus, the 366-residue chain is Flagellar P-ring protein (366 aa).

A signal peptide spans 1 to 23 (MRTLKIFALAVSLLSMLAAPVQA).

Belongs to the FlgI family. In terms of assembly, the basal body constitutes a major portion of the flagellar organelle and consists of four rings (L,P,S, and M) mounted on a central rod.

The protein resides in the periplasm. It localises to the bacterial flagellum basal body. Assembles around the rod to form the L-ring and probably protects the motor/basal body from shearing forces during rotation. This Idiomarina loihiensis (strain ATCC BAA-735 / DSM 15497 / L2-TR) protein is Flagellar P-ring protein.